The primary structure comprises 190 residues: Xanthine phosphoribosyltransferase (190 aa).

Leu-20 and Asn-27 together coordinate xanthine. 5-phospho-alpha-D-ribose 1-diphosphate is bound at residue Ala-128–Ala-132. Lys-156 lines the xanthine pocket.

This sequence belongs to the purine/pyrimidine phosphoribosyltransferase family. Xpt subfamily. As to quaternary structure, homodimer.

Its subcellular location is the cytoplasm. It carries out the reaction XMP + diphosphate = xanthine + 5-phospho-alpha-D-ribose 1-diphosphate. The protein operates within purine metabolism; XMP biosynthesis via salvage pathway; XMP from xanthine: step 1/1. Its function is as follows. Converts the preformed base xanthine, a product of nucleic acid breakdown, to xanthosine 5'-monophosphate (XMP), so it can be reused for RNA or DNA synthesis. The polypeptide is Xanthine phosphoribosyltransferase (Pseudomonas aeruginosa (strain ATCC 15692 / DSM 22644 / CIP 104116 / JCM 14847 / LMG 12228 / 1C / PRS 101 / PAO1)).